The following is a 248-amino-acid chain: Granzyme-like protein 1 (248 aa).

Residues Met-1 to Ala-18 form the signal peptide. A propeptide spans Ala-19–Glu-20 (activation peptide). In terms of domain architecture, Peptidase S1 spans Ile-21–Lys-246. Cys-50 and Cys-66 form a disulfide bridge. The Charge relay system role is filled by His-65. N-linked (GlcNAc...) asparagine glycosylation occurs at Asn-72. Residue Asp-109 is the Charge relay system of the active site. Cystine bridges form between Cys-143–Cys-210 and Cys-174–Cys-189. Ser-204 (charge relay system) is an active-site residue.

It belongs to the peptidase S1 family. Granzyme subfamily. In terms of tissue distribution, duodenum.

Functionally, this enzyme is necessary for target cell lysis in cell-mediated immune responses. This Rattus norvegicus (Rat) protein is Granzyme-like protein 1.